Reading from the N-terminus, the 455-residue chain is Bifunctional protein GlmU (455 aa).

The interval 1 to 228 (MNNTLTTIIL…EFEIEGVNNR (228 aa)) is pyrophosphorylase. UDP-N-acetyl-alpha-D-glucosamine-binding positions include 10-13 (LAAG), lysine 24, glutamine 75, 80-81 (GT), 102-104 (YGD), glycine 138, glutamate 153, asparagine 168, and asparagine 226. Aspartate 104 serves as a coordination point for Mg(2+). Asparagine 226 lines the Mg(2+) pocket. Positions 229–249 (QQLAQLERKWQAKLVEDLQVQ) are linker. The interval 250–455 (GVQFADPNRV…DNYQRPEKKK (206 aa)) is N-acetyltransferase. Positions 332 and 350 each coordinate UDP-N-acetyl-alpha-D-glucosamine. Histidine 362 (proton acceptor) is an active-site residue. 2 residues coordinate UDP-N-acetyl-alpha-D-glucosamine: tyrosine 365 and asparagine 376. Residues alanine 379, 385-386 (NY), alanine 422, and arginine 439 each bind acetyl-CoA.

This sequence in the N-terminal section; belongs to the N-acetylglucosamine-1-phosphate uridyltransferase family. It in the C-terminal section; belongs to the transferase hexapeptide repeat family. In terms of assembly, homotrimer. The cofactor is Mg(2+).

It is found in the cytoplasm. It catalyses the reaction alpha-D-glucosamine 1-phosphate + acetyl-CoA = N-acetyl-alpha-D-glucosamine 1-phosphate + CoA + H(+). The enzyme catalyses N-acetyl-alpha-D-glucosamine 1-phosphate + UTP + H(+) = UDP-N-acetyl-alpha-D-glucosamine + diphosphate. Its pathway is nucleotide-sugar biosynthesis; UDP-N-acetyl-alpha-D-glucosamine biosynthesis; N-acetyl-alpha-D-glucosamine 1-phosphate from alpha-D-glucosamine 6-phosphate (route II): step 2/2. It participates in nucleotide-sugar biosynthesis; UDP-N-acetyl-alpha-D-glucosamine biosynthesis; UDP-N-acetyl-alpha-D-glucosamine from N-acetyl-alpha-D-glucosamine 1-phosphate: step 1/1. The protein operates within bacterial outer membrane biogenesis; LPS lipid A biosynthesis. Functionally, catalyzes the last two sequential reactions in the de novo biosynthetic pathway for UDP-N-acetylglucosamine (UDP-GlcNAc). The C-terminal domain catalyzes the transfer of acetyl group from acetyl coenzyme A to glucosamine-1-phosphate (GlcN-1-P) to produce N-acetylglucosamine-1-phosphate (GlcNAc-1-P), which is converted into UDP-GlcNAc by the transfer of uridine 5-monophosphate (from uridine 5-triphosphate), a reaction catalyzed by the N-terminal domain. The polypeptide is Bifunctional protein GlmU (Psychrobacter sp. (strain PRwf-1)).